We begin with the raw amino-acid sequence, 632 residues long: Pescadillo homolog (632 aa).

The interval 306 to 341 is disordered; it reads GDDADVDMDEGAKETDEEEDEDFVERPSKAQEVDDV. The span at 307 to 328 shows a compositional bias: acidic residues; sequence DDADVDMDEGAKETDEEEDEDF. Residues 361–459 enclose the BRCT domain; sequence RQNLLFSPYT…KIISSEGYGP (99 aa). Disordered regions lie at residues 485-535, 565-585, and 601-632; these read GEKA…QNPS, TKVH…EEDL, and MQYS…EAKA. The span at 492–516 shows a compositional bias: acidic residues; that stretch reads QEGEEEEEAAEQDEGESEDEEEDGK. Positions 521-531 are enriched in low complexity; that stretch reads AEYPPALLAAA. Composition is skewed to basic and acidic residues over residues 576-585 and 605-616; these read QKEKKGEEDL and NREKAAEKEKLE. Residues 595–632 are a coiled coil; it reads AKLYEKMQYSNREKAAEKEKLEKKRKAIEKRKAKEAKA.

It belongs to the pescadillo family. As to quaternary structure, component of the NOP7 complex, composed of ERB1, NOP7 and YTM1. The complex is held together by ERB1, which interacts with NOP7 via its N-terminal domain and with YTM1 via a high-affinity interaction between the seven-bladed beta-propeller domains of the 2 proteins. The NOP7 complex associates with the 66S pre-ribosome.

The protein localises to the nucleus. Its subcellular location is the nucleolus. It is found in the nucleoplasm. Component of the NOP7 complex, which is required for maturation of the 25S and 5.8S ribosomal RNAs and formation of the 60S ribosome. The polypeptide is Pescadillo homolog (Cryptococcus neoformans var. neoformans serotype D (strain B-3501A) (Filobasidiella neoformans)).